The chain runs to 173 residues: RNA pyrophosphohydrolase (173 aa).

Residues 6-149 (GFRANVGIII…KRDVYRKVMK (144 aa)) enclose the Nudix hydrolase domain. The Nudix box motif lies at 38–59 (GGVDDGETPEEAMYRELYEEVG).

Belongs to the Nudix hydrolase family. RppH subfamily. The cofactor is a divalent metal cation.

Its function is as follows. Accelerates the degradation of transcripts by removing pyrophosphate from the 5'-end of triphosphorylated RNA, leading to a more labile monophosphorylated state that can stimulate subsequent ribonuclease cleavage. This Shewanella woodyi (strain ATCC 51908 / MS32) protein is RNA pyrophosphohydrolase.